Here is a 186-residue protein sequence, read N- to C-terminus: Protein GrpE (186 aa).

Residues 1–22 show a composition bias toward basic and acidic residues; sequence MSDSNKEKKKKFADMVSKRKGD. Residues 1 to 35 form a disordered region; sequence MSDSNKEKKKKFADMVSKRKGDDQEDQQTGDLSEE. Acidic residues predominate over residues 23–34; sequence DQEDQQTGDLSE.

It belongs to the GrpE family. In terms of assembly, homodimer.

It localises to the cytoplasm. In terms of biological role, participates actively in the response to hyperosmotic and heat shock by preventing the aggregation of stress-denatured proteins, in association with DnaK and GrpE. It is the nucleotide exchange factor for DnaK and may function as a thermosensor. Unfolded proteins bind initially to DnaJ; upon interaction with the DnaJ-bound protein, DnaK hydrolyzes its bound ATP, resulting in the formation of a stable complex. GrpE releases ADP from DnaK; ATP binding to DnaK triggers the release of the substrate protein, thus completing the reaction cycle. Several rounds of ATP-dependent interactions between DnaJ, DnaK and GrpE are required for fully efficient folding. The polypeptide is Protein GrpE (Wolbachia pipientis subsp. Culex pipiens (strain wPip)).